A 427-amino-acid polypeptide reads, in one-letter code: Gamma-glutamyl phosphate reductase (427 aa).

This sequence belongs to the gamma-glutamyl phosphate reductase family.

It localises to the cytoplasm. The catalysed reaction is L-glutamate 5-semialdehyde + phosphate + NADP(+) = L-glutamyl 5-phosphate + NADPH + H(+). The protein operates within amino-acid biosynthesis; L-proline biosynthesis; L-glutamate 5-semialdehyde from L-glutamate: step 2/2. Its function is as follows. Catalyzes the NADPH-dependent reduction of L-glutamate 5-phosphate into L-glutamate 5-semialdehyde and phosphate. The product spontaneously undergoes cyclization to form 1-pyrroline-5-carboxylate. In Streptomyces griseus subsp. griseus (strain JCM 4626 / CBS 651.72 / NBRC 13350 / KCC S-0626 / ISP 5235), this protein is Gamma-glutamyl phosphate reductase.